The sequence spans 394 residues: Elongation factor Tu 1 (394 aa).

The tr-type G domain maps to 10 to 204 (KPHVNVGTIG…ALDSYIPEPE (195 aa)). Residues 19–26 (GHVDHGKT) form a G1 region. A GTP-binding site is contributed by 19 to 26 (GHVDHGKT). Thr26 contacts Mg(2+). Positions 60 to 64 (GITIN) are G2. Residues 81–84 (DCPG) are G3. GTP is bound by residues 81 to 85 (DCPGH) and 136 to 139 (NKCD). A G4 region spans residues 136–139 (NKCD). The tract at residues 174 to 176 (SAL) is G5.

This sequence belongs to the TRAFAC class translation factor GTPase superfamily. Classic translation factor GTPase family. EF-Tu/EF-1A subfamily. Monomer.

Its subcellular location is the cytoplasm. It catalyses the reaction GTP + H2O = GDP + phosphate + H(+). GTP hydrolase that promotes the GTP-dependent binding of aminoacyl-tRNA to the A-site of ribosomes during protein biosynthesis. This Shewanella sp. (strain MR-4) protein is Elongation factor Tu 1.